The sequence spans 149 residues: Altered inheritance of mitochondria protein 11 (149 aa).

The next 2 membrane-spanning stretches (helical) occupy residues 29–48 (MMRFIGSTAVTLISCRLAIT) and 79–101 (LVLATGITVGTLSMLVSGSCWIW).

The protein belongs to the AIM11 family.

Its subcellular location is the membrane. This Vanderwaltozyma polyspora (strain ATCC 22028 / DSM 70294 / BCRC 21397 / CBS 2163 / NBRC 10782 / NRRL Y-8283 / UCD 57-17) (Kluyveromyces polysporus) protein is Altered inheritance of mitochondria protein 11 (AIM11).